The sequence spans 315 residues: Voltage-dependent calcium channel gamma-3 subunit (315 aa).

The next 4 helical transmembrane spans lie at 8–28 (IQMLITTVGAFAAFSLMTIAV), 104–124 (SSVFPILSVTLLFFGGLCVAA), 135–155 (ILSAGIFFVSAGLSNIIGIIV), and 181–201 (FGAFSFIIAEIVGVVAVHIYI). Phosphoserine is present on S248.

It belongs to the PMP-22/EMP/MP20 family. CACNG subfamily. The L-type calcium channel is composed of five subunits: alpha-1, alpha-2/delta, beta and gamma. Acts as an auxiliary subunit for AMPA-selective glutamate receptors (AMPARs). Found in a complex with GRIA1, GRIA2, GRIA3, GRIA4, CNIH2, CNIH3, CACNG2, CACNG4, CACNG5, CACNG7 and CACNG8. Interacts with AP4M1 and GRIA1; associates GRIA1 with the adaptor protein complex 4 (AP-4) to target GRIA1 to the somatodendritic compartment of neurons.

The protein localises to the membrane. Functionally, regulates the trafficking to the somatodendritic compartment and gating properties of AMPA-selective glutamate receptors (AMPARs). Promotes their targeting to the cell membrane and synapses and modulates their gating properties by slowing their rates of activation, deactivation and desensitization. Does not show subunit-specific AMPA receptor regulation and regulates all AMPAR subunits. Thought to stabilize the calcium channel in an inactivated (closed) state. This chain is Voltage-dependent calcium channel gamma-3 subunit (CACNG3), found in Homo sapiens (Human).